A 313-amino-acid polypeptide reads, in one-letter code: Protease HtpX homolog (313 aa).

2 helical membrane-spanning segments follow: residues Ala7–Ile24 and Gly29–Trp46. His130 provides a ligand contact to Zn(2+). Glu131 is an active-site residue. Position 134 (His134) interacts with Zn(2+). 2 helical membrane-spanning segments follow: residues Ile145–Gly165 and Pro172–Val192. Residue Glu201 participates in Zn(2+) binding. Positions Gly282–Ser313 are disordered.

The protein belongs to the peptidase M48B family. It depends on Zn(2+) as a cofactor.

The protein localises to the cell inner membrane. This is Protease HtpX homolog from Chelativorans sp. (strain BNC1).